We begin with the raw amino-acid sequence, 242 residues long: GDSL esterase/lipase At5g62930 (242 aa).

The active-site Nucleophile is S11. Positions 223 to 242 (PHHSHIDGKNPSKAFEERCL) are disordered.

The protein belongs to the 'GDSL' lipolytic enzyme family.

This chain is GDSL esterase/lipase At5g62930, found in Arabidopsis thaliana (Mouse-ear cress).